The sequence spans 236 residues: (5-formylfuran-3-yl)methyl phosphate synthase (236 aa).

The Schiff-base intermediate with substrate role is filled by Lys-27. The active-site Proton acceptor is Lys-85.

This sequence belongs to the MfnB family.

The catalysed reaction is 2 D-glyceraldehyde 3-phosphate = 4-(hydroxymethyl)-2-furancarboxaldehyde phosphate + phosphate + 2 H2O. Its pathway is cofactor biosynthesis; methanofuran biosynthesis. Functionally, catalyzes the formation of 4-(hydroxymethyl)-2-furancarboxaldehyde phosphate (4-HFC-P) from two molecules of glyceraldehyde-3-P (GA-3-P). The polypeptide is (5-formylfuran-3-yl)methyl phosphate synthase (Methanococcus maripaludis (strain C7 / ATCC BAA-1331)).